We begin with the raw amino-acid sequence, 532 residues long: MKLAYWMYAGPAHLGTLRVASSFKNVHAIMHAPLGDDYFNVMRSMLERERDFTPVTASIVDRHVLARGSQEKVVDNITRKEKEERPDLIVLTPTCTSSILQEDLQNFVNRALTLKDSHADVLLADVNHYRVNEFQAADRTLEQIVRFYIEKAKRENFDFSKNQKISANILGVFTLGFHNMHDCRELKRLLTDLGIEINEIIPEGGNVTNLRNLPKAHFNIVPYREVGLMTAMYLKNEFQMPYISTTPMGILNTAQFIREIETLLKALTQNLSNSSNCEKFNISFAEEAAKILEKDFQKYISEQSRFVSQAAWFSRSIDCQNLTGKRAVVFGDATHAASMTKILSCEMGIRVVCSGTYCKHDADWFREQVRGFCDEILITEDHSQVGDMISRLEPAAIFGTQMERHVGKRLDIPCGVISAPVHIQNFPLGYRPFLGYEGTNQIADLVYNSFTLGMEDHLLEIFNGHDTKQILPKIQFEDGSLEWSKDALEELSRIPGFVRGKVKRNVEKFAQQNNKPFITLELMFAAKEAVNA.

Asp36 contributes to the [4Fe-4S] cluster binding site. Asp318 serves as the catalytic Proton donor. Residue 453-454 (GM) participates in substrate binding.

It belongs to the ChlB/BchB/BchZ family. As to quaternary structure, protochlorophyllide reductase is composed of three subunits; ChlL, ChlN and ChlB. Forms a heterotetramer of two ChlB and two ChlN subunits. The cofactor is [4Fe-4S] cluster.

It is found in the plastid. Its subcellular location is the chloroplast. It carries out the reaction chlorophyllide a + oxidized 2[4Fe-4S]-[ferredoxin] + 2 ADP + 2 phosphate = protochlorophyllide a + reduced 2[4Fe-4S]-[ferredoxin] + 2 ATP + 2 H2O. Its pathway is porphyrin-containing compound metabolism; chlorophyll biosynthesis (light-independent). Functionally, component of the dark-operative protochlorophyllide reductase (DPOR) that uses Mg-ATP and reduced ferredoxin to reduce ring D of protochlorophyllide (Pchlide) to form chlorophyllide a (Chlide). This reaction is light-independent. The NB-protein (ChlN-ChlB) is the catalytic component of the complex. This Tetradesmus obliquus (Green alga) protein is Light-independent protochlorophyllide reductase subunit B.